A 161-amino-acid polypeptide reads, in one-letter code: Transcriptional regulator MraZ (161 aa).

2 SpoVT-AbrB domains span residues 7–69 and 98–141; these read KELH…EPDV and LDVV…EPER.

It belongs to the MraZ family. As to quaternary structure, forms oligomers.

It localises to the cytoplasm. The protein resides in the nucleoid. This chain is Transcriptional regulator MraZ, found in Chlorobium limicola (strain DSM 245 / NBRC 103803 / 6330).